Here is a 525-residue protein sequence, read N- to C-terminus: GMP synthase [glutamine-hydrolyzing] (525 aa).

In terms of domain architecture, Glutamine amidotransferase type-1 spans Lys8–Asn207. The Nucleophile role is filled by Cys85. Residues His181 and Glu183 contribute to the active site. Positions Trp208–Arg400 constitute a GMPS ATP-PPase domain. Ser235–Ser241 serves as a coordination point for ATP.

Homodimer.

The enzyme catalyses XMP + L-glutamine + ATP + H2O = GMP + L-glutamate + AMP + diphosphate + 2 H(+). Its pathway is purine metabolism; GMP biosynthesis; GMP from XMP (L-Gln route): step 1/1. Catalyzes the synthesis of GMP from XMP. This chain is GMP synthase [glutamine-hydrolyzing], found in Shewanella sp. (strain MR-7).